The following is a 245-amino-acid chain: 1-(5-phosphoribosyl)-5-[(5-phosphoribosylamino)methylideneamino] imidazole-4-carboxamide isomerase (245 aa).

The active-site Proton acceptor is aspartate 7. Aspartate 129 (proton donor) is an active-site residue.

Belongs to the HisA/HisF family.

Its subcellular location is the cytoplasm. The enzyme catalyses 1-(5-phospho-beta-D-ribosyl)-5-[(5-phospho-beta-D-ribosylamino)methylideneamino]imidazole-4-carboxamide = 5-[(5-phospho-1-deoxy-D-ribulos-1-ylimino)methylamino]-1-(5-phospho-beta-D-ribosyl)imidazole-4-carboxamide. It participates in amino-acid biosynthesis; L-histidine biosynthesis; L-histidine from 5-phospho-alpha-D-ribose 1-diphosphate: step 4/9. This Shewanella baltica (strain OS155 / ATCC BAA-1091) protein is 1-(5-phosphoribosyl)-5-[(5-phosphoribosylamino)methylideneamino] imidazole-4-carboxamide isomerase.